The primary structure comprises 2417 residues: Protein pad-1 (2417 aa).

4 disordered regions span residues 409–437 (SSNS…DREG), 449–475 (SNKD…PDEE), 994–1029 (TSTG…DDDT), and 1957–2032 (SMSN…RRDP). Low complexity-rich tracts occupy residues 456-468 (TSVT…NASS) and 1002-1024 (DPSA…VVPA). Residues 1969-1982 (DNPSGSTRNSTLSL) show a composition bias toward polar residues. Positions 2003–2014 (SKSENMKIEKKS) are enriched in basic and acidic residues. The span at 2015-2025 (SSNLRASIKDT) shows a compositional bias: polar residues.

It belongs to the DOP1 family.

Its function is as follows. May be involved in protein traffic between late Golgi and early endosomes. Essential for cell patterning during gastrulation. The protein is Protein pad-1 (pad-1) of Caenorhabditis elegans.